A 517-amino-acid chain; its full sequence is tRNA (guanine-N(7)-)-methyltransferase non-catalytic subunit trm82 (517 aa).

The segment at 40–117 is disordered; it reads WKSPVPESMS…TKNSSPKILE (78 aa). A compositionally biased stretch (basic and acidic residues) spans 52 to 64; the sequence is KTTEEETQTKNED. 3 WD repeats span residues 116-158, 260-301, and 306-346; these read LEPS…GLRQ, GHVS…HIIE, and GHIE…LLSK.

Belongs to the WD repeat TRM82 family. In terms of assembly, forms a heterodimer with the catalytic subunit trm8.

The protein resides in the nucleus. The protein operates within tRNA modification; N(7)-methylguanine-tRNA biosynthesis. Functionally, required for the formation of N(7)-methylguanine at position 46 (m7G46) in tRNA. In the complex, it is required to stabilize and induce conformational changes of the catalytic subunit. The sequence is that of tRNA (guanine-N(7)-)-methyltransferase non-catalytic subunit trm82 (trm82) from Sclerotinia sclerotiorum (strain ATCC 18683 / 1980 / Ss-1) (White mold).